The following is a 370-amino-acid chain: Serine O-succinyltransferase (370 aa).

An AB hydrolase-1 domain is found at 46–355 (AILIVTGLSP…PQGHDAFLVD (310 aa)). The important for substrate specificity stretch occupies residues 52 to 55 (GLSP). Ser149 acts as the Nucleophile in catalysis. Arg218 provides a ligand contact to substrate. Catalysis depends on residues Asp316 and His349. Residue Asp350 participates in substrate binding.

This sequence belongs to the AB hydrolase superfamily. MetX family. Homodimer.

The protein resides in the cytoplasm. The catalysed reaction is succinyl-CoA + L-serine = O-succinyl-L-serine + CoA. The enzyme catalyses L-homoserine + succinyl-CoA = O-succinyl-L-homoserine + CoA. It functions in the pathway amino-acid biosynthesis; L-cysteine biosynthesis; L-cysteine from L-serine: step 1/2. Functionally, transfers a succinyl group from succinyl-CoA to L-serine, forming succinyl-L-serine. In vitro, also has homoserine succinyl transferase activity. The polypeptide is Serine O-succinyltransferase (Stenotrophomonas maltophilia (Pseudomonas maltophilia)).